The following is a 446-amino-acid chain: Phosphoglucosamine mutase (446 aa).

S100 acts as the Phosphoserine intermediate in catalysis. 4 residues coordinate Mg(2+): S100, D239, D241, and D243. Residue S100 is modified to Phosphoserine.

The protein belongs to the phosphohexose mutase family. Mg(2+) serves as cofactor. Post-translationally, activated by phosphorylation.

The catalysed reaction is alpha-D-glucosamine 1-phosphate = D-glucosamine 6-phosphate. In terms of biological role, catalyzes the conversion of glucosamine-6-phosphate to glucosamine-1-phosphate. This chain is Phosphoglucosamine mutase, found in Shouchella clausii (strain KSM-K16) (Alkalihalobacillus clausii).